Consider the following 303-residue polypeptide: Protein REVEILLE 5 (303 aa).

The HTH myb-type domain maps to Thr-54–Gln-108. Residues Trp-81–Phe-104 constitute a DNA-binding region (H-T-H motif). The tract at residues Lys-109–Pro-130 is disordered.

It is found in the nucleus. Functionally, probable transcription factor. This chain is Protein REVEILLE 5 (RVE5), found in Arabidopsis thaliana (Mouse-ear cress).